Reading from the N-terminus, the 385-residue chain is Odorant receptor 82a (385 aa).

Over 1 to 32 (MGRLFQLQEYCLRAMGHKDDMDSTDSTALSLK) the chain is Cytoplasmic. The chain crosses the membrane as a helical span at residues 33 to 53 (HISSLIFVISAQYPLISYVAY). The Extracellular segment spans residues 54–62 (NRNDMEKVT). A helical transmembrane segment spans residues 63-83 (ACLSVVFTNMLTVIKISTFLA). Over 84 to 131 (NRKDFWEMIHRFRKMHEQSASHIPRYREGLDYVAEANKLASFLGRAYC) the chain is Cytoplasmic. Residues 132–152 (VSCGLTGLYFMLGPIVKIGVC) traverse the membrane as a helical segment. At 153 to 186 (RWHGTTCDKELPMPMKFPFNDLESPGYEVCFLYT) the chain is on the extracellular side. A helical membrane pass occupies residues 187–207 (VLVTVVVVAYASAVDGLFISF). At 208–257 (AINLRAHFQTLQRQIENWEFPSSEPDTQIRLKSIVEYHVLLLSLSRKLRS) the chain is on the cytoplasmic side. A helical transmembrane segment spans residues 258 to 278 (IYTPTVMGQFVITSLQVGVII). Topologically, residues 279–290 (YQLVTNMDSVMD) are extracellular. A helical transmembrane segment spans residues 291–311 (LLLYASFFGSIMLQLFIYCYG). Topologically, residues 312–357 (GEIIKAESLQVDTAVRLSNWHLASPKTRTSLSLIILQSQKEVLIRA) are cytoplasmic. Residues 358–378 (GFFVASLANFVGICRTALSLI) form a helical membrane-spanning segment. The Extracellular segment spans residues 379-385 (TLIKSIE).

It belongs to the insect chemoreceptor superfamily. Heteromeric odorant receptor channel (TC 1.A.69) family. Or1a subfamily. As to quaternary structure, interacts with Orco. Complexes exist early in the endomembrane system in olfactory sensory neurons (OSNs), coupling these complexes to the conserved ciliary trafficking pathway. As to expression, expressed in olfactory sensory neurons in the antenna.

The protein localises to the cell membrane. Odorant receptor which mediates acceptance or avoidance behavior, depending on its substrates. The odorant receptor repertoire encodes a large collection of odor stimuli that vary widely in identity, intensity, and duration. May form a complex with Orco to form odorant-sensing units, providing sensitive and prolonged odorant signaling and calcium permeability. The sequence is that of Odorant receptor 82a (Or82a) from Drosophila melanogaster (Fruit fly).